A 176-amino-acid chain; its full sequence is ADP-ribosylation factor-like protein 11 (176 aa).

The N-myristoyl glycine moiety is linked to residue Gly-2. Residues 19 to 26 (GLDSAGKT), 63 to 67 (DIGGQ), and 122 to 125 (NKQE) contribute to the GTP site.

This sequence belongs to the small GTPase superfamily. Arf family.

May play a role in apoptosis. May act as a tumor suppressor. The sequence is that of ADP-ribosylation factor-like protein 11 (Arl11) from Mus musculus (Mouse).